Consider the following 296-residue polypeptide: Enoyl-CoA hydratase AKT3-2 (296 aa).

The Peroxisomal targeting signal type 1 motif lies at 294–296 (PKL).

This sequence belongs to the enoyl-CoA hydratase/isomerase family.

The protein localises to the peroxisome. It catalyses the reaction a (3S)-3-hydroxyacyl-CoA = a (2E)-enoyl-CoA + H2O. It carries out the reaction a 4-saturated-(3S)-3-hydroxyacyl-CoA = a (3E)-enoyl-CoA + H2O. It participates in mycotoxin biosynthesis. Its function is as follows. Enoyl-CoA hydratase; part of the gene clusters that mediate the biosynthesis of the host-selective toxins (HSTs) AK-toxins responsible for Japanese pear black spot disease by the Japanese pear pathotype. AK-toxins are esters of 9,10-epoxy 8-hydroxy 9-methyldecatrienoic acid (EDA). On cellular level, AK-toxins affect plasma membrane of susceptible cells and cause a sudden increase in loss of K(+) after a few minutes of toxin treatment. The acyl-CoA ligase AKT1, the hydrolase AKT2 and enoyl-CoA hydratase AKT3 are all involved in the biosynthesis of the AK-, AF- and ACT-toxin common 9,10-epoxy-8-hydroxy-9-methyl-decatrienoic acid (EDA) structural moiety. Part of the EDA biosynthesis occurs in the peroxisome since these 3 enzymes are localized in peroxisomes. The exact roles of the 3 enzymes, as well as of additional AK-toxin clusters enzymes, including AKT4, AKT6 and AKTS1, have still to be elucidated. The Cytochrome P450 monooxygenase AKT7 on the other side functions to limit production of EDA and AK-toxin, probably via the catalysis of a side reaction of EDA or its precursor. The polypeptide is Enoyl-CoA hydratase AKT3-2 (Alternaria alternata (Alternaria rot fungus)).